A 396-amino-acid chain; its full sequence is Elongation factor Tu (396 aa).

Residues 10–206 (KPHVNVGTIG…ALDTFIPEPT (197 aa)) enclose the tr-type G domain. The interval 19–26 (GHVDHGKT) is G1. Residue 19–26 (GHVDHGKT) participates in GTP binding. Residue T26 participates in Mg(2+) binding. The tract at residues 60-64 (GITIS) is G2. A G3 region spans residues 81 to 84 (DCPG). GTP is bound by residues 81–85 (DCPGH) and 136–139 (NKAD). A G4 region spans residues 136–139 (NKAD). Residues 174 to 176 (SAR) are G5.

Belongs to the TRAFAC class translation factor GTPase superfamily. Classic translation factor GTPase family. EF-Tu/EF-1A subfamily. Monomer.

The protein localises to the cytoplasm. The enzyme catalyses GTP + H2O = GDP + phosphate + H(+). Its function is as follows. GTP hydrolase that promotes the GTP-dependent binding of aminoacyl-tRNA to the A-site of ribosomes during protein biosynthesis. The sequence is that of Elongation factor Tu from Xanthomonas oryzae pv. oryzae (strain MAFF 311018).